A 242-amino-acid chain; its full sequence is ATP synthase subunit a (242 aa).

7 helical membrane passes run 23–43 (ISFT…AVLL), 62–82 (VELI…VGGL), 84–104 (YIPF…IGIL), 113–133 (HVSV…VLGF), 143–163 (IFLP…IKLF), 176–196 (LAAN…FVLK), and 201–221 (LAPL…FVAI).

Belongs to the ATPase A chain family. In terms of assembly, F-type ATPases have 2 components, CF(1) - the catalytic core - and CF(0) - the membrane proton channel. CF(1) has five subunits: alpha(3), beta(3), gamma(1), delta(1), epsilon(1). CF(0) has three main subunits: a(1), b(2) and c(9-12). The alpha and beta chains form an alternating ring which encloses part of the gamma chain. CF(1) is attached to CF(0) by a central stalk formed by the gamma and epsilon chains, while a peripheral stalk is formed by the delta and b chains.

Its subcellular location is the cell inner membrane. In terms of biological role, key component of the proton channel; it plays a direct role in the translocation of protons across the membrane. The protein is ATP synthase subunit a of Anaplasma phagocytophilum (strain HZ).